The primary structure comprises 525 residues: MTQNIHQHRILILDFGSQYTQLVARRVRELGVYCELWAWDVTEAQIRGFNPNGIILSGGPESTTEFGSPRAPEYVFNAGVPVLGVCYGMQTMAMQLGGHVEGSNEREFGYAQVEVKTNSALVRDIQDALSATGAPLLDVWMSHGDKVTAIPEGFETVASTDTCPFAIMANEEKRFYGVQFHPEVTHTRQGQRMLERFVLDICQCEALWTPAKIIDDAVNRIREQVGNDSVILGLSGGVDSSVTAMLLHRAIGDRLTCVFVDNGLLRLNEADQVLEMFGDNFGLNIVHVAAEDRFLNELAGEDEPEAKRKIIGRVFVEVFDEEANKQAEVKWLAQGTIYPDVIESAASATGKAHVIKSHHNVGGLPKEMKLGLVEPLKELFKDEVRKIGLELGLPYNMLYRHPFPGPGLGVRVLGEVKKEYCDLLRRADAIFIEELHKADLYNKVSQAFTVFLPVRSVGVMGDGRKYDWVVALRAVETIDFMTAHWAHLPYDFLGRVSNRIINEVDGISRVVYDVSGKPPATIEWE.

The Glutamine amidotransferase type-1 domain maps to Arg-9–Leu-207. The active-site Nucleophile is the Cys-86. Catalysis depends on residues His-181 and Glu-183. In terms of domain architecture, GMPS ATP-PPase spans Trp-208 to Arg-400. ATP is bound at residue Ser-235–Ser-241.

In terms of assembly, homodimer.

It catalyses the reaction XMP + L-glutamine + ATP + H2O = GMP + L-glutamate + AMP + diphosphate + 2 H(+). The protein operates within purine metabolism; GMP biosynthesis; GMP from XMP (L-Gln route): step 1/1. Functionally, catalyzes the synthesis of GMP from XMP. This is GMP synthase [glutamine-hydrolyzing] from Pectobacterium atrosepticum (strain SCRI 1043 / ATCC BAA-672) (Erwinia carotovora subsp. atroseptica).